Reading from the N-terminus, the 785-residue chain is Semaphorin-3E (785 aa).

The first 25 residues, 1-25 (MLGRMASAQDLLILALCGLLLELPA), serve as a signal peptide directing secretion. Positions 36-520 (RLRLSHKELW…TESVIAQVKF (485 aa)) constitute a Sema domain. N-linked (GlcNAc...) asparagine glycosylation occurs at asparagine 48. Cysteine 109 and cysteine 119 are oxidised to a cystine. Asparagine 130 carries N-linked (GlcNAc...) asparagine glycosylation. Cystine bridges form between cysteine 137-cysteine 146, cysteine 274-cysteine 386, cysteine 298-cysteine 346, and cysteine 523-cysteine 541. The N-linked (GlcNAc...) asparagine glycan is linked to asparagine 600. In terms of domain architecture, Ig-like C2-type spans 651–740 (LDAGTYFCQT…EYCEKVWCTD (90 aa)). Cysteine 658 and cysteine 733 are joined by a disulfide. The interval 744–785 (KKLKMSPSKWKYANPQEKRQDQEKKARIRPEHYRLPRNIADS) is disordered. The segment covering 759 to 777 (QEKRQDQEKKARIRPEHYR) has biased composition (basic and acidic residues).

The protein belongs to the semaphorin family. Collapsin-1, -2, -3, and -5 bind to overlapping but distinct axon tracts.

The protein resides in the secreted. Its function is as follows. Plays an important role in signaling via the cell surface receptor PLXND1. Mediates reorganization of the actin cytoskeleton, leading to the retraction of cell projections. Promotes focal adhesion disassembly and inhibits adhesion of endothelial cells to the extracellular matrix. Regulates angiogenesis. Can down-regulate sprouting angiogenesis. Required for normal vascular patterning during embryogenesis. Induces the collapse and paralysis of neuronal growth cones. Plays an important role in ensuring the specificity of synapse formation. This is Semaphorin-3E (SEMA3E) from Gallus gallus (Chicken).